Here is a 361-residue protein sequence, read N- to C-terminus: Chorismate synthase (361 aa).

NADP(+) is bound at residue Arg48. FMN contacts are provided by residues 126–128 (RFS), Gly286, 301–305 (KPTPS), and Arg328.

This sequence belongs to the chorismate synthase family. The cofactor is FMNH2.

It carries out the reaction 5-O-(1-carboxyvinyl)-3-phosphoshikimate = chorismate + phosphate. Its pathway is metabolic intermediate biosynthesis; chorismate biosynthesis; chorismate from D-erythrose 4-phosphate and phosphoenolpyruvate: step 7/7. Its function is as follows. Catalyzes the anti-1,4-elimination of the C-3 phosphate and the C-6 proR hydrogen from 5-enolpyruvylshikimate-3-phosphate (EPSP) to yield chorismate, which is the branch point compound that serves as the starting substrate for the three terminal pathways of aromatic amino acid biosynthesis. This reaction introduces a second double bond into the aromatic ring system. The chain is Chorismate synthase from Korarchaeum cryptofilum (strain OPF8).